Reading from the N-terminus, the 468-residue chain is MAALSCYPPEWDDDERMSFLFSAFKQTRDVNTSDWDGKMKFWIPLILKHARAQGLLSISLSQLERDFRRKGFAPLGLRIVIQEMMRQGTLRKESDYVSNVSSGWLSWGMRQLVIRPLRWTIGTVLGSQMGPDEPLVIPEIIKERAALVLQRYQSSPLRALPLLSEEEVRTLCAEICPNPSALNLVLLQLQGDKKICVLERAGKKLVKFVRVSVGQVDPISESDLGIYELQQSEKLLSERLQSAGEESDRLTEEARTYNRAGNKHQALRCLRKRKLLERRITELQNKQDTVQGILERIAAAETDRKVVSAYQMGVSALKLALKDVTMEKAESIVDQIQEYCDLQDDLSQTLASVSDADIDSEDLEKELNDILQNKEMIVDLPDVPSGPVVISPQRPTEWETDQDIDSEDLEKELNDILQKEEMIVDLPDVPSGPVVISPQRPTEWKTDQASRSPADGSFSRSVPEPVLQ.

Coiled coils occupy residues 233 to 303 and 353 to 379; these read EKLL…AETD and VSDA…MIVD. Residues 428-468 are disordered; that stretch reads DVPSGPVVISPQRPTEWKTDQASRSPADGSFSRSVPEPVLQ.

It belongs to the SNF7 family.

The protein localises to the cytoplasm. It localises to the nucleus envelope. In terms of biological role, ESCRT-III-like protein required to recruit the ESCRT-III complex to the nuclear envelope during late anaphase. Together with SPAST, the ESCRT-III complex promotes nuclear envelope sealing and mitotic spindle disassembly during late anaphase. Plays a role in the endosomal sorting pathway. This Xenopus tropicalis (Western clawed frog) protein is Charged multivesicular body protein 7 (chmp7).